Reading from the N-terminus, the 462-residue chain is Ketoisovalerate reductase (462 aa).

A disordered region spans residues 34-55 (PTAVKPDRADRGDFDPGKYPVD). The segment covering 38–49 (KPDRADRGDFDP) has biased composition (basic and acidic residues). An NADP(+)-binding site is contributed by 72-77 (GPGNVG). Residues 167 to 184 (ADRLRRYLGRCSSVVFAQ) carry the Calmoduling-binding motif. The Proton donor role is filled by K290. 3 residues coordinate substrate: N294, N298, and S403. Residue E415 coordinates NADP(+).

This sequence belongs to the ketopantoate reductase family. As to quaternary structure, homodimer. Binds to calmodulin in a calcium-independent manner.

It catalyses the reaction (R)-2-hydroxy-3-methylbutanoate + NADP(+) = 3-methyl-2-oxobutanoate + NADPH + H(+). With respect to regulation, environmental stimuli such as light and salt stress suppress activity through stimulation of calmodulin (CaM) that binds BEA2 and probably impairs its dimerization. Ketoisovalerate reductase; part of the gene cluster that mediates the biosynthesis of beauvericin (BEA), a non-ribosomal cyclic hexadepsipeptide that shows antibiotic, antifungal, insecticidal, and cancer cell antiproliferative and antihaptotactic activity. Ketoisovalerate reductase BEA2 catalyzes the NADPH-specific reduction of ketoisovaleric acid to hydroxyisovalerate, a precursor for beauvericin biosynthesis. The nonribosomal cyclodepsipeptide synthetase BEA1 then catalyzes the formation of beauvericin via condensation and cyclization of 3 dipeptidol monomers, each composed of one unit of hydroxyisovalerate and one unit of N-methyl-phenylalanine. The chain is Ketoisovalerate reductase from Beauveria bassiana (White muscardine disease fungus).